The primary structure comprises 219 residues: Probable GTP-binding protein EngB (219 aa).

An EngB-type G domain is found at 40-212; sequence LLPEIAFIGK…KASLAKCIIK (173 aa). GTP is bound by residues 48–55, 75–79, 93–96, 160–163, and 191–193; these read GKSNVGKS, GRTGQ, DLPG, TKFD, and VSS. Residues S55 and T77 each contribute to the Mg(2+) site.

This sequence belongs to the TRAFAC class TrmE-Era-EngA-EngB-Septin-like GTPase superfamily. EngB GTPase family. Requires Mg(2+) as cofactor.

Its function is as follows. Necessary for normal cell division and for the maintenance of normal septation. The chain is Probable GTP-binding protein EngB from Rickettsia canadensis (strain McKiel).